The sequence spans 822 residues: Putative pentatricopeptide repeat-containing protein At5g13230, mitochondrial (822 aa).

Residues 1–70 (MIVFMRIIHV…QKNDPISAKA (70 aa)) constitute a mitochondrion transit peptide. PPR repeat units lie at residues 48–82 (DSHA…GSCL), 83–117 (DLFA…NNVS), 145–179 (NPHV…GYDS), 180–210 (NAFV…ILCK), 211–245 (DIVV…GFMP), 246–280 (NNYT…CYVL), 281–311 (DPRV…MPKN), 312–346 (DVVP…FVVP), 347–381 (NEFT…GFDL), 382–416 (DIYV…NEVS), 417–447 (WNTV…QVSV), 448–482 (TEVT…NNAK), 483–513 (KVAV…METI), 514–548 (DVAS…DCKP), 549–584 (NGLT…GIEP), and 585–619 (CLEH…PSVM). A type E motif region spans residues 620 to 695 (IWRAMLSASM…EPGLSWIEHQ (76 aa)). The type E(+) motif stretch occupies residues 696–726 (GDVHYFSVGLSDHPDMKLINGMLEWLNMKAT). Residues 727-822 (RAGYVPDRNA…AGVCSCGDHW (96 aa)) form a type DYW motif region.

It belongs to the PPR family. PCMP-H subfamily.

The protein resides in the mitochondrion. The chain is Putative pentatricopeptide repeat-containing protein At5g13230, mitochondrial (PCMP-H89) from Arabidopsis thaliana (Mouse-ear cress).